Reading from the N-terminus, the 414-residue chain is MIVRIYPSEISGTIKAPQSKSLAIRLIFLSLFTRIHLHNLVLSEDVIDAINSVRALGVEVKNNSEFIPPEKLEIKKKFIKLKGSGTTLRMLIPIVAAIGGEVTIDAEESLRRRPLKRIVEALSNYGISFSSSSLPLTITGKLSSYNIKISGDESSQYISGLIYALHILNGGSIEILPPISSKSYILLTVDLFNRFGSNVKFYGNKIHINPNNLVEFQGEVAGDYGLASFYALSALLSGGRTTIVNLWEPKEYFGDHSIVKILKEMGATSEYLDGKWYVEAKDKYSSIKVNIDDAPDLAMTIAGLAAIAEGTSEITGIERLRIKESDRIESIRKVLGLYGVGSEVKSNSILIFGINKRMLSSPITDCLNDHRVAMMSSALALVNGGVITSAECVSKSNPNYWQDLLSLNAKISIE.

Residues K20, S21, and R25 each coordinate 3-phosphoshikimate. K20 is a phosphoenolpyruvate binding site. Phosphoenolpyruvate-binding residues include G85 and R113. 3-phosphoshikimate contacts are provided by S154, S155, Q156, S181, D296, and K323. Q156 is a phosphoenolpyruvate binding site. Catalysis depends on D296, which acts as the Proton acceptor. Phosphoenolpyruvate contacts are provided by R327, R371, and K395.

This sequence belongs to the EPSP synthase family. Monomer.

The protein localises to the cytoplasm. The enzyme catalyses 3-phosphoshikimate + phosphoenolpyruvate = 5-O-(1-carboxyvinyl)-3-phosphoshikimate + phosphate. It participates in metabolic intermediate biosynthesis; chorismate biosynthesis. Its function is as follows. Catalyzes the transfer of the enolpyruvyl moiety of phosphoenolpyruvate (PEP) to the 5-hydroxyl of shikimate-3-phosphate (S3P) to produce enolpyruvyl shikimate-3-phosphate and inorganic phosphate. The chain is 3-phosphoshikimate 1-carboxyvinyltransferase from Saccharolobus islandicus (strain M.14.25 / Kamchatka #1) (Sulfolobus islandicus).